A 271-amino-acid chain; its full sequence is UPF0758 protein ACIAD3126 (271 aa).

An MPN domain is found at N120 to L242. The Zn(2+) site is built by H191, H193, and D204. The JAMM motif motif lies at H191 to D204.

Belongs to the UPF0758 family.

The sequence is that of UPF0758 protein ACIAD3126 from Acinetobacter baylyi (strain ATCC 33305 / BD413 / ADP1).